The chain runs to 367 residues: Zorya protein ZorE (367 aa).

Component of antiviral defense system Zorya type II, composed of ZorA, ZorB and ZorE. Expression of Zorya type II in E.coli (strain MG1655) confers resistance to phages SECphi7 and T7. While most T7 infected Zorya-containing cells undergo abortive infection, a minority produce viable phage progeny. These eventually accumulate to a high multiplicity of infection, leading to culture collapse by 170 minutes after initial infection. ZorA and ZorB probably assemble in the cell inner membrane and exert their effect there. This may be a nuclease. The sequence is that of Zorya protein ZorE from Escherichia coli (strain ATCC 8739 / DSM 1576 / NBRC 3972 / NCIMB 8545 / WDCM 00012 / Crooks).